Here is a 192-residue protein sequence, read N- to C-terminus: Apoptosis regulator BAX (192 aa).

M1 bears the N-acetylmethionine mark. A BH3 motif is present at residues 59–73 (LSECLRRIGDELDSN). The BH1 signature appears at 98–118 (DMFADGNFNWGRVVALFYFAS). K128 participates in a covalent cross-link: Glycyl lysine isopeptide (Lys-Gly) (interchain with G-Cter in ubiquitin). The BH2 motif lies at 150–165 (VWIQDQGGWEGLLSYF). A helical membrane pass occupies residues 172-192 (TVTIFVAGVLTASLTIWKKMG). K190 participates in a covalent cross-link: Glycyl lysine isopeptide (Lys-Gly) (interchain with G-Cter in ubiquitin).

The protein belongs to the Bcl-2 family. In terms of assembly, homodimer. Forms higher oligomers under stress conditions. Forms heterooligomers with BAK. Interacts with BCL2L11. Interaction with BCL2L11 promotes BAX oligomerization and association with mitochondrial membranes, with subsequent release of cytochrome c. Forms heterodimers with BCL2. Forms heterodimers with BCL2L1 isoform Bcl-X(L), BCL2L2, MCL1 and A1. Interacts with SH3GLB1. Interacts with SFN and YWHAZ; the interaction occurs in the cytoplasm. Under stress conditions, JNK-mediated phosphorylation of SFN and YWHAZ, releases BAX to mitochondria. Interacts with RNF144B, which regulates the ubiquitin-dependent stability of BAX. Interacts with CLU under stress conditions that cause a conformation change leading to BAX oligomerization and association with mitochondria. Does not interact with CLU in unstressed cells. Interacts with FAIM2/LFG2. Interacts with BOP. Interacts (via a C-terminal 33 residues) with NOL3 (via CARD domain); inhibits BAX activation and translocationand consequently cytochrome c release from mitochondria. Interacts with GIMAP3/IAN4 and GIMAP5/IAN5; this interaction is increased, when cells initiate apoptosis upon IL2 withdrawal. Interacts with IRF3; the interaction is direct and, upon virus infection, mediates the formation of the apoptosis complex TOMM70:HSP90AA1:IRF3:BAX. Interacts with MOAP1, facilitating BAX-dependent mitochondrial outer membrane permeabilization and apoptosis. Interacts with BCL2L10/BCL-B. Interacts with non-acetylated XRCC6/Ku70; this interaction leads to BAX sequestration in the cytosol, away from the mitochondria, preventing BAX-mediated apoptosis. As to quaternary structure, (Microbial infection) Interacts with gamma-herpesvirus 68 protein vBCL2. In terms of processing, ubiquitinated in the absence of XRCC6/Ku70. Ubiquitinated on Lys-128 and Lys-190. 'Lys-63'-linked polyubiquitin chains on Lys-128 are removed by USP12. As to expression, expressed in a wide variety of tissues.

It is found in the mitochondrion outer membrane. It localises to the cytoplasm. Its subcellular location is the nucleus. Functionally, accelerates programmed cell death by binding to, and antagonizing the apoptosis repressor BCL2 or its adenovirus homolog E1B 19k protein. Under stress conditions, undergoes a conformation change that causes translocation to the mitochondrion membrane, leading to the release of cytochrome c that then triggers apoptosis. Promotes activation of CASP3, and thereby apoptosis. BAX deficiency leads to lymphoid hyperplasia and male sterility, because of the cessation of sperm production. The polypeptide is Apoptosis regulator BAX (Bax) (Mus musculus (Mouse)).